A 380-amino-acid polypeptide reads, in one-letter code: Glucose-1-phosphate adenylyltransferase (380 aa).

Residues Gly-164, 179–180 (EK), and Ser-190 each bind alpha-D-glucose 1-phosphate.

The protein belongs to the bacterial/plant glucose-1-phosphate adenylyltransferase family. Homotetramer.

It catalyses the reaction alpha-D-glucose 1-phosphate + ATP + H(+) = ADP-alpha-D-glucose + diphosphate. It participates in glycan biosynthesis; glycogen biosynthesis. Involved in the biosynthesis of ADP-glucose, a building block required for the elongation reactions to produce glycogen. Catalyzes the reaction between ATP and alpha-D-glucose 1-phosphate (G1P) to produce pyrophosphate and ADP-Glc. The chain is Glucose-1-phosphate adenylyltransferase from Streptococcus pneumoniae (strain CGSP14).